Here is a 507-residue protein sequence, read N- to C-terminus: Beta-Ala-His dipeptidase (507 aa).

A signal peptide spans 1-26 (MDPKLGRMAASLLAVLLLLLERGMFS). Residue histidine 132 participates in Zn(2+) binding. Aspartate 134 is an active-site residue. Aspartate 165 is a Zn(2+) binding site. Glutamate 199 acts as the Proton acceptor in catalysis. Glutamate 200 provides a ligand contact to Zn(2+). Serine 219 bears the Phosphoserine mark. A Zn(2+)-binding site is contributed by aspartate 228. 2 N-linked (GlcNAc...) asparagine glycosylation sites follow: asparagine 322 and asparagine 382. Residue histidine 478 participates in Zn(2+) binding.

This sequence belongs to the peptidase M20A family. Homodimer. Requires Zn(2+) as cofactor. Found in serum and adult nervous central system. Absent in serum from patients with homocarnosinosis.

The protein resides in the secreted. The enzyme catalyses Preferential hydrolysis of the beta-Ala-|-His dipeptide (carnosine), and also anserine, Xaa-|-His dipeptides and other dipeptides including homocarnosine.. It catalyses the reaction carnosine + H2O = beta-alanine + L-histidine. It carries out the reaction anserine + H2O = N(pros)-methyl-L-histidine + beta-alanine. The catalysed reaction is L-alanyl-L-histidine + H2O = L-histidine + L-alanine. The enzyme catalyses glycyl-L-histidine + H2O = L-histidine + glycine. It catalyses the reaction L-homocarnosine + H2O = 4-aminobutanoate + L-histidine. With respect to regulation, activated by cadmium ions. Inhibited by the metal chelator 1,10-o-phenantrolin. The inhibitory concentration 50% (IC(50)) is 5 uM. Its function is as follows. Catalyzes the peptide bond hydrolysis in Xaa-His dipeptides, displaying the highest activity toward carnosine (beta-alanyl-L-histidine) and anserine (beta-alanyl-3-methyl-histidine). The sequence is that of Beta-Ala-His dipeptidase from Homo sapiens (Human).